Here is a 70-residue protein sequence, read N- to C-terminus: Exodeoxyribonuclease 7 small subunit (70 aa).

The protein belongs to the XseB family. Heterooligomer composed of large and small subunits.

The protein resides in the cytoplasm. The catalysed reaction is Exonucleolytic cleavage in either 5'- to 3'- or 3'- to 5'-direction to yield nucleoside 5'-phosphates.. Its function is as follows. Bidirectionally degrades single-stranded DNA into large acid-insoluble oligonucleotides, which are then degraded further into small acid-soluble oligonucleotides. The protein is Exodeoxyribonuclease 7 small subunit of Streptococcus sanguinis (strain SK36).